The sequence spans 199 residues: Probable chemoreceptor glutamine deamidase CheD (199 aa).

Belongs to the CheD family.

The enzyme catalyses L-glutaminyl-[protein] + H2O = L-glutamyl-[protein] + NH4(+). In terms of biological role, probably deamidates glutamine residues to glutamate on methyl-accepting chemotaxis receptors (MCPs), playing an important role in chemotaxis. This is Probable chemoreceptor glutamine deamidase CheD from Cereibacter sphaeroides (strain ATCC 17025 / ATH 2.4.3) (Rhodobacter sphaeroides).